The following is an 804-amino-acid chain: DNA mismatch repair protein MutS (804 aa).

An ATP-binding site is contributed by 614-621 (GPNMAGKS).

This sequence belongs to the DNA mismatch repair MutS family.

In terms of biological role, this protein is involved in the repair of mismatches in DNA. It is possible that it carries out the mismatch recognition step. This protein has a weak ATPase activity. The polypeptide is DNA mismatch repair protein MutS (Ehrlichia chaffeensis (strain ATCC CRL-10679 / Arkansas)).